The chain runs to 264 residues: Thymidylate synthase (264 aa).

DUMP is bound by residues R21 and 126 to 127; that span reads RR. C146 (nucleophile) is an active-site residue. DUMP contacts are provided by residues 166–169, N177, and 207–209; these read RSAD and HLY. Residue D169 coordinates (6R)-5,10-methylene-5,6,7,8-tetrahydrofolate. A263 is a (6R)-5,10-methylene-5,6,7,8-tetrahydrofolate binding site.

The protein belongs to the thymidylate synthase family. Bacterial-type ThyA subfamily. In terms of assembly, homodimer.

Its subcellular location is the cytoplasm. It carries out the reaction dUMP + (6R)-5,10-methylene-5,6,7,8-tetrahydrofolate = 7,8-dihydrofolate + dTMP. It participates in pyrimidine metabolism; dTTP biosynthesis. Catalyzes the reductive methylation of 2'-deoxyuridine-5'-monophosphate (dUMP) to 2'-deoxythymidine-5'-monophosphate (dTMP) while utilizing 5,10-methylenetetrahydrofolate (mTHF) as the methyl donor and reductant in the reaction, yielding dihydrofolate (DHF) as a by-product. This enzymatic reaction provides an intracellular de novo source of dTMP, an essential precursor for DNA biosynthesis. The sequence is that of Thymidylate synthase from Bradyrhizobium sp. (strain BTAi1 / ATCC BAA-1182).